Reading from the N-terminus, the 873-residue chain is DNA helicase/primase complex-associated protein (873 aa).

A disordered region spans residues 394-422 (PPLPRDDGDGENNVVEVSSSTGGAHPPSD).

The protein belongs to the herpesviridae HEPA family. As to quaternary structure, associates with the primase and the helicase to form the helicase-primase complex. Interacts with the origin-binding protein. Interacts with the polymerase catalytic subunit.

The protein resides in the host nucleus. In terms of biological role, component of the helicase/primase complex. Unwinds the DNA at the replication forks and generates single-stranded DNA for both leading and lagging strand synthesis. The primase synthesizes short RNA primers on the lagging strand that the polymerase presumably elongates using dNTPs. The primase-associated factor has no known catalytic activity in the complex and may serve to facilitate the formation of the replisome by directly interacting with the origin-binding protein and the polymerase. This Human cytomegalovirus (strain Merlin) (HHV-5) protein is DNA helicase/primase complex-associated protein (UL102).